Reading from the N-terminus, the 370-residue chain is MKYILIKLSIVMIFIINSASKAERIRDLTTIVGVRDNVLIGYGLVVGLDGTGDQTTQTPFTIQSLRNMLSQLGVSIPSGINMQLKNIAAVMVTAKLPPFVKIGQKIDVMVSSLGSAKSLRGGTLLITPLKGVDNQIYALAQGNILVSGFGAQSGGNTSQVNQLNGGRISEGAIIEKSIKTDFDKREIITLQLNNNDFSLAQQISDAINTYFGKKSAYPTDSRTINVILSASYDKSEKVKFIARLQNIPIIIGPSDAIIVINSRTGSVVINKEVMLNSCAVAHGELTVEIKKRTKVNQPNTILGGGSTVVTPETEILIKNQGDSLQEISSSTNLNEVISSLNSIGAKPNDLMAILESMKSAGCLNAKLEIN.

A signal peptide spans methionine 1–lysine 21.

The protein belongs to the FlgI family. In terms of assembly, the basal body constitutes a major portion of the flagellar organelle and consists of four rings (L,P,S, and M) mounted on a central rod.

The protein localises to the bacterial flagellum basal body. Assembles around the rod to form the L-ring and probably protects the motor/basal body from shearing forces during rotation. This chain is Flagellar P-ring protein, found in Wigglesworthia glossinidia brevipalpis.